The sequence spans 216 residues: UPF0323 lipoprotein HPG27_212 (216 aa).

A signal peptide spans 1-27; that stretch reads MKKPYRKISDYAIVGGLSALVMVSIVG. Cys28 carries the N-palmitoyl cysteine lipid modification. Cys28 is lipidated: S-diacylglycerol cysteine. Over residues 159–170 the composition is skewed to polar residues; that stretch reads QRTYKSPQAYQR. The tract at residues 159–216 is disordered; that stretch reads QRTYKSPQAYQRSQNSFSKSAPSASSMGGASKGQSGFFGSSRPTSSPAVSSGTRGFNS. Residues 171–209 show a composition bias toward low complexity; that stretch reads SQNSFSKSAPSASSMGGASKGQSGFFGSSRPTSSPAVSS.

This sequence belongs to the UPF0323 family.

The protein localises to the cell membrane. This Helicobacter pylori (strain G27) protein is UPF0323 lipoprotein HPG27_212.